Here is a 208-residue protein sequence, read N- to C-terminus: MSQGNLYILSAPSGAGKSSLISALLEQDQANTMMVSVSHTTRQPRPGEENGVHYHFVSVEEFELLINEGAFLEYAKVFGGNYYGTSLPTIEKNLAQGIDVFLDIDWQGAQQIRKKVPSVKSIFILPPSLAELEKRLIGRGQDSAEVIADRMSKAMDEISHYNEYDYVIINDDFTRALADLVHILRAEKLTLAYQTEQNQALINQLLAK.

The region spanning 4–185 (GNLYILSAPS…ALADLVHILR (182 aa)) is the Guanylate kinase-like domain. 11–18 (APSGAGKS) is a binding site for ATP.

The protein belongs to the guanylate kinase family.

It is found in the cytoplasm. The enzyme catalyses GMP + ATP = GDP + ADP. Functionally, essential for recycling GMP and indirectly, cGMP. The sequence is that of Guanylate kinase from Mannheimia succiniciproducens (strain KCTC 0769BP / MBEL55E).